A 591-amino-acid chain; its full sequence is V-type ATP synthase alpha chain (591 aa).

242–249 lines the ATP pocket; sequence GPFGAGKT.

It belongs to the ATPase alpha/beta chains family.

The enzyme catalyses ATP + H2O + 4 H(+)(in) = ADP + phosphate + 5 H(+)(out). Produces ATP from ADP in the presence of a proton gradient across the membrane. The V-type alpha chain is a catalytic subunit. The sequence is that of V-type ATP synthase alpha chain from Chlamydia abortus (strain DSM 27085 / S26/3) (Chlamydophila abortus).